The sequence spans 140 residues: MLPAAMKGLGLVLLAALLCSSPAHGLWCQDCTLTTNSSHCTPKQCHPSDTVCATVWITDPSSSRKDHSVNKMCASSCDFVKRHFFSDYLMGFINSGILKVDVDCCEKDLCNGVAQAGLSPWALAGGLLLSLGPALLWAGP.

An N-terminal signal peptide occupies residues 1–25 (MLPAAMKGLGLVLLAALLCSSPAHG). Positions 26–91 (LWCQDCTLTT…RHFFSDYLMG (66 aa)) constitute a UPAR/Ly6 domain. Intrachain disulfides connect Cys-28–Cys-52, Cys-31–Cys-40, Cys-45–Cys-73, Cys-77–Cys-104, and Cys-105–Cys-110. A glycan (N-linked (GlcNAc...) asparagine) is linked at Asn-36.

Its subcellular location is the cell membrane. The protein is Lymphocyte antigen 6H (LY6H) of Bos taurus (Bovine).